Here is a 137-residue protein sequence, read N- to C-terminus: MANKPSAEELKKNLSEMQFYVTQNHGTEPPFTGRLLHNKRDGVYHCLICDAPLFHSETKYDSGCGWPSFYEPVSEESIRYIKDLSHGMQRIEIRCGNCDAHLGHVFPDGPQPTGERYCVNSASLRFTDGENGEEING.

The region spanning 7–129 is the MsrB domain; the sequence is AEELKKNLSE…NSASLRFTDG (123 aa). Residues cysteine 46, cysteine 49, cysteine 95, and cysteine 98 each coordinate Zn(2+). Catalysis depends on cysteine 118, which acts as the Nucleophile.

This sequence belongs to the MsrB Met sulfoxide reductase family. Zn(2+) is required as a cofactor.

It carries out the reaction L-methionyl-[protein] + [thioredoxin]-disulfide + H2O = L-methionyl-(R)-S-oxide-[protein] + [thioredoxin]-dithiol. The protein is Peptide methionine sulfoxide reductase MsrB of Escherichia coli O8 (strain IAI1).